The following is a 196-amino-acid chain: Orotate phosphoribosyltransferase (196 aa).

117-125 contributes to the 5-phospho-alpha-D-ribose 1-diphosphate binding site; sequence EDVVTTGLS. Residues Thr121 and Arg149 each contribute to the orotate site.

This sequence belongs to the purine/pyrimidine phosphoribosyltransferase family. PyrE subfamily. Homodimer. Requires Mg(2+) as cofactor.

It catalyses the reaction orotidine 5'-phosphate + diphosphate = orotate + 5-phospho-alpha-D-ribose 1-diphosphate. It functions in the pathway pyrimidine metabolism; UMP biosynthesis via de novo pathway; UMP from orotate: step 1/2. In terms of biological role, catalyzes the transfer of a ribosyl phosphate group from 5-phosphoribose 1-diphosphate to orotate, leading to the formation of orotidine monophosphate (OMP). The sequence is that of Orotate phosphoribosyltransferase from Rhizorhabdus wittichii (strain DSM 6014 / CCUG 31198 / JCM 15750 / NBRC 105917 / EY 4224 / RW1) (Sphingomonas wittichii).